We begin with the raw amino-acid sequence, 230 residues long: Androgen-dependent TFPI-regulating protein (230 aa).

The Cytoplasmic segment spans residues 1–7 (MTKTTTC). The chain crosses the membrane as a helical span at residues 8–28 (LYHFVVLNWYIFLNYYIPQIG). The Extracellular segment spans residues 29-45 (KDEEKLKEFHDGGRSKY). The chain crosses the membrane as a helical span at residues 46-66 (LTLLNLLLQAVFFGVACLDDV). Over 67–85 (LKRVIGRKDIKFITYFRDL) the chain is Cytoplasmic. A helical transmembrane segment spans residues 86-106 (LFTTLAFPLSTFVFLVFWSLF). Over 107 to 120 (HYDRSLVYPKGLDD) the chain is Extracellular. The helical transmembrane segment at 121 to 141 (FFPAWVNHAMHTSIFPFSLAE) threads the bilayer. The Cytoplasmic segment spans residues 142–155 (TVLRPHNYPSKKLG). A helical transmembrane segment spans residues 156–173 (LSLLGACNFAYIIRILWR). The Extracellular segment spans residues 174-190 (YVQTGNWVYPVFASLSP). Residues 191–211 (LGIILFFSASYILSASLYLFG) form a helical membrane-spanning segment. Topologically, residues 212-230 (EKINHWKWGATVKPRMKKN) are cytoplasmic.

The protein belongs to the AIG1 family.

It localises to the cell membrane. It carries out the reaction 9-hexadecanoyloxy-octadecanoate + H2O = 9-hydroxy-octadecanoate + hexadecanoate + H(+). It catalyses the reaction 12-hexadecanoyloxy-octadecanoate + H2O = 12-hydroxyoctadecanoate + hexadecanoate + H(+). The enzyme catalyses 9-(9Z-hexadecenoyloxy)-octadecanoate + H2O = (9Z)-hexadecenoate + 9-hydroxy-octadecanoate + H(+). The catalysed reaction is 12-(9Z-hexadecenoyloxy)-octadecanoate + H2O = 12-hydroxyoctadecanoate + (9Z)-hexadecenoate + H(+). It carries out the reaction 13-(9Z-hexadecenoyloxy)-octadecanoate + H2O = 13-hydroxy-octadecanoate + (9Z)-hexadecenoate + H(+). It catalyses the reaction 9-octadecanoyloxy-octadecanoate + H2O = 9-hydroxy-octadecanoate + octadecanoate + H(+). The enzyme catalyses 12-octadecanoyloxy-octadecanoate + H2O = 12-hydroxyoctadecanoate + octadecanoate + H(+). The catalysed reaction is 13-octadecanoyloxy-octadecanoate + H2O = 13-hydroxy-octadecanoate + octadecanoate + H(+). It carries out the reaction 9-(9Z-octadecenoyloxy)-octadecanoate + H2O = 9-hydroxy-octadecanoate + (9Z)-octadecenoate + H(+). It catalyses the reaction 12-(9Z-octadecenoyloxy)-octadecanoate + H2O = 12-hydroxyoctadecanoate + (9Z)-octadecenoate + H(+). The enzyme catalyses 13-(9Z-octadecenoyloxy)-octadecanoate + H2O = 13-hydroxy-octadecanoate + (9Z)-octadecenoate + H(+). The catalysed reaction is 5-(9Z-octadecenoyloxy)-octadecanoate + H2O = 5-hydroxy-octadecanoate + (9Z)-octadecenoate + H(+). Its function is as follows. Hydrolyzes bioactive fatty-acid esters of hydroxy-fatty acids (FAHFAs), but not other major classes of lipids. Shows a preference for FAHFAs with branching distal from the carboxylate head group of the lipids. Regulates the expression and the cell-associated anticoagulant activity of the inhibitor TFPI in endothelial cells (in vitro). In Rattus norvegicus (Rat), this protein is Androgen-dependent TFPI-regulating protein (Adtrp).